The primary structure comprises 60 residues: Large ribosomal subunit protein uL30 (60 aa).

The protein belongs to the universal ribosomal protein uL30 family. In terms of assembly, part of the 50S ribosomal subunit.

The protein is Large ribosomal subunit protein uL30 of Streptococcus uberis (strain ATCC BAA-854 / 0140J).